The chain runs to 205 residues: MASDHQTQAGKPQPLNPKIIIFEQENFQGHSHELSGPCPNLKETGMEKAGSVLVQAGPWVGYEQANCKGEQFVFEKGEYPRWDSWTSSRRTDSLSSLRPIKVDSQEHKIILYENPNFTGKKMEIVDDDVPSFHAHGYQEKVSSVRVQSGTWVGYQYPGYRGLQYLLEKGDYKDNSDFGAPHPQVQSVRRIRDMQWHQRGAFHPSS.

Position 2 is an N-acetylalanine (Ala-2). The interval 2–16 is N-terminal arm; sequence ASDHQTQAGKPQPLN. Beta/gamma crystallin 'Greek key' domains are found at residues 17 to 56 and 57 to 101; these read PKII…LVQA and GPWV…RPIK. The segment at 102–106 is connecting peptide; sequence VDSQE. Beta/gamma crystallin 'Greek key' domains follow at residues 107–148 and 149–191; these read HKII…RVQS and GTWV…RRIR. Residues 193 to 205 form a C-terminal arm region; the sequence is MQWHQRGAFHPSS.

It belongs to the beta/gamma-crystallin family. As to quaternary structure, homo/heterodimer, or complexes of higher-order. The structure of beta-crystallin oligomers seems to be stabilized through interactions between the N-terminal arms.

Its function is as follows. Crystallins are the dominant structural components of the vertebrate eye lens. This is Beta-crystallin B2 (CRYBB2) from Mesocricetus auratus (Golden hamster).